The chain runs to 186 residues: Ribosome-recycling factor (186 aa).

The protein belongs to the RRF family.

It localises to the cytoplasm. Its function is as follows. Responsible for the release of ribosomes from messenger RNA at the termination of protein biosynthesis. May increase the efficiency of translation by recycling ribosomes from one round of translation to another. This chain is Ribosome-recycling factor, found in Ralstonia pickettii (strain 12J).